The sequence spans 432 residues: Glutamate-1-semialdehyde 2,1-aminomutase (432 aa).

An N6-(pyridoxal phosphate)lysine modification is found at Lys272.

This sequence belongs to the class-III pyridoxal-phosphate-dependent aminotransferase family. HemL subfamily. In terms of assembly, homodimer. Pyridoxal 5'-phosphate serves as cofactor.

The protein resides in the cytoplasm. It catalyses the reaction (S)-4-amino-5-oxopentanoate = 5-aminolevulinate. It participates in porphyrin-containing compound metabolism; protoporphyrin-IX biosynthesis; 5-aminolevulinate from L-glutamyl-tRNA(Glu): step 2/2. Its pathway is porphyrin-containing compound metabolism; chlorophyll biosynthesis. The polypeptide is Glutamate-1-semialdehyde 2,1-aminomutase (Cyanothece sp. (strain PCC 7425 / ATCC 29141)).